An 805-amino-acid chain; its full sequence is N-(5-amino-5-carboxypentanoyl)-L-cysteinyl-D-valine synthase (805 aa).

The tract at residues 783 to 805 (PDTGGGAVGSTTTGGVRGELREI) is disordered.

This sequence belongs to the ATP-dependent AMP-binding enzyme family. Requires pantetheine 4'-phosphate as cofactor.

The enzyme catalyses L-2-aminoadipate + L-valine + L-cysteine + 3 ATP + H2O = N-[(5S)-5-amino-5-carboxypentanoyl]-L-cysteinyl-D-valine + 3 AMP + 3 diphosphate + 3 H(+). The protein operates within antibiotic biosynthesis; penicillin G biosynthesis; penicillin G from L-alpha-aminoadipate and L-cysteine and L-valine: step 1/3. In terms of biological role, each of the constituent amino acids of ACV are activated as aminoacyl-adenylates with peptide bonds formed through the participation of amino acid thioester intermediates. The sequence is that of N-(5-amino-5-carboxypentanoyl)-L-cysteinyl-D-valine synthase (pcbAB) from Streptomyces clavuligerus.